The chain runs to 63 residues: Large ribosomal subunit protein uL30 (63 aa).

This sequence belongs to the universal ribosomal protein uL30 family. As to quaternary structure, part of the 50S ribosomal subunit.

The protein is Large ribosomal subunit protein uL30 of Hahella chejuensis (strain KCTC 2396).